The sequence spans 248 residues: Granulin (248 aa).

Belongs to the polyhedrin family.

Functionally, component of the virus occlusion bodies, which are large proteinaceous structures, that protect the virus from the outside environment for extended periods until they are ingested by insect larvae. The chain is Granulin from Cydia pomonella (Codling moth).